The sequence spans 449 residues: Phosphoglucosamine mutase (449 aa).

Residue Ser-101 is the Phosphoserine intermediate of the active site. 4 residues coordinate Mg(2+): Ser-101, Asp-240, Asp-242, and Asp-244. The residue at position 101 (Ser-101) is a Phosphoserine.

The protein belongs to the phosphohexose mutase family. Mg(2+) is required as a cofactor. Activated by phosphorylation.

The enzyme catalyses alpha-D-glucosamine 1-phosphate = D-glucosamine 6-phosphate. In terms of biological role, catalyzes the conversion of glucosamine-6-phosphate to glucosamine-1-phosphate. The protein is Phosphoglucosamine mutase of Streptococcus suis (strain 98HAH33).